We begin with the raw amino-acid sequence, 455 residues long: Epoxide hydrolase 1 (455 aa).

Residues 1–21 (MWLEILLTSVLGFAIYWFISR) traverse the membrane as a helical; Signal-anchor for type III membrane protein segment. Residues 22 to 455 (DKEETLPLED…RKFLSVLERQ (434 aa)) are Cytoplasmic-facing. The Nucleophile role is filled by Asp226. Residue Arg295 is modified to Dimethylated arginine. Tyr374 acts as the Proton donor in catalysis. His431 (proton acceptor) is an active-site residue.

It belongs to the peptidase S33 family. In terms of tissue distribution, found in liver.

It localises to the microsome membrane. Its subcellular location is the endoplasmic reticulum membrane. It catalyses the reaction cis-stilbene oxide + H2O = (1R,2R)-hydrobenzoin. The enzyme catalyses 1-(4-methoxyphenyl)-N-methyl-N-[(3-methyloxetan-3-yl)methyl]methanamine + H2O = 2-{[(4-methoxybenzyl)(methyl)amino]methyl}-2-methylpropane-1,3-diol. The catalysed reaction is 8,9-epoxy-(5Z,11Z,14Z)-eicosatrienoate + H2O = 8,9-dihydroxy-(5Z,11Z,14Z)-eicosatrienoate. It carries out the reaction 11,12-epoxy-(5Z,8Z,14Z)-eicosatrienoate + H2O = 11,12-dihydroxy-(5Z,8Z,14Z)-eicosatrienoate. It catalyses the reaction 2-(5Z,8Z,11Z,14Z-eicosatetraenoyl)-glycerol + H2O = glycerol + (5Z,8Z,11Z,14Z)-eicosatetraenoate + H(+). Its activity is regulated as follows. Inhibited by 10-hydroxystearamide and methoxy-arachidonyl fluorophosphate. In terms of biological role, biotransformation enzyme that catalyzes the hydrolysis of arene and aliphatic epoxides to less reactive and more water soluble dihydrodiols by the trans addition of water. Plays a role in the metabolism of endogenous lipids such as epoxide-containing fatty acids. Metabolizes the abundant endocannabinoid 2-arachidonoylglycerol (2-AG) to free arachidonic acid (AA) and glycerol. Binds 20(S)-hydroxycholesterol (20(S)-OHC). This chain is Epoxide hydrolase 1, found in Homo sapiens (Human).